A 59-amino-acid chain; its full sequence is uncharacterized protein (59 aa).

2 stretches are compositionally biased toward basic and acidic residues: residues 1 to 23 (MAEH…DAGR) and 36 to 45 (DPQRASEAGK). The interval 1–59 (MAEHRGGSGNFAEDREKASDAGRKGGQHSGGNFKNDPQRASEAGKKGGQQSGGNKSGKS) is disordered. Gly residues predominate over residues 46–59 (KGGQQSGGNKSGKS).

The protein belongs to the con-10 family.

This is an uncharacterized protein from Escherichia coli (strain K12).